The sequence spans 659 residues: Pseudouridylate synthase 7 homolog (659 aa).

Met1 bears the N-acetylmethionine mark. Polar residues-rich tracts occupy residues Met1–Ser10 and Cys39–Ser54. The disordered stretch occupies residues Met1–Phe99. Position 10 is a phosphoserine (Ser10). Positions Pro75–Ser98 are enriched in acidic residues. Ser125 bears the Phosphoserine mark. Asp292 serves as the catalytic Nucleophile. The TRUD domain maps to Gly368–Arg578.

This sequence belongs to the pseudouridine synthase TruD family. As to quaternary structure, interacts with SIRT1.

Its subcellular location is the nucleus. It catalyses the reaction a uridine in tRNA = a pseudouridine in tRNA. The enzyme catalyses uridine(13) in tRNA = pseudouridine(13) in tRNA. It carries out the reaction a uridine in mRNA = a pseudouridine in mRNA. Functionally, pseudouridylate synthase that catalyzes pseudouridylation of RNAs. Acts as a regulator of protein synthesis in embryonic stem cells by mediating pseudouridylation of RNA fragments derived from tRNAs (tRFs): pseudouridylated tRFs inhibit translation by targeting the translation initiation complex. Also catalyzes pseudouridylation of mRNAs: mediates pseudouridylation of mRNAs with the consensus sequence 5'-UGUAG-3'. Acts as a regulator of pre-mRNA splicing by mediating pseudouridylation of pre-mRNAs at locations associated with alternatively spliced regions. Pseudouridylation of pre-mRNAs near splice sites directly regulates mRNA splicing and mRNA 3'-end processing. In addition to mRNAs and tRNAs, binds other types of RNAs, such as snRNAs, Y RNAs and vault RNAs, suggesting that it can catalyze pseudouridylation of many RNA types. This is Pseudouridylate synthase 7 homolog from Bos taurus (Bovine).